The chain runs to 807 residues: MSSGQSFSRSLMKLPLSLLVKSTSIPSNPVEDLNIDLSKPIVYALPFRSSVDILTLQKHALELGLPDPLSKLEINGKSLQRYVFISSRKTLLQDDDYVPSSSIEVFSELLSLHAEDSELDVQVIPATVLWGRKPGKENNQKPYLQAMNGLEKSKAVLLAGRDCLVRFSPVVSLRYMANSHGTDSTIAHKLARVARIHFSRQKLAASGPNLPSRQALFDRLLKSEAIKKAIEDEAESKNISIEKASKEAQDIMDEIAANFSYSLIKRGEKILGWLWNKLYQGLHISNASTVRKLAQDGHEIVYVPCHRSHMDYLLLSYVLYHEGMVPPHIAAGINLNFFPAGPIFRHGGAFFIRRSFKGNKLYSTIFREYLAELFAKGYSVEYFSEGGRSRTGRLLQAKTGMLAMTIQAMLRGMNRPVTLVPVYIGYEHVMEVATYAKELRGKRKEKENASLVIRTIRKLRNFGKGYVNFGEPIQLNQYLNEHAPEWTKDIDPMGTSKPQWMNPVVNDLATKMMTHINDAAATNALTLCATALLASRQRALSRDSLVSQINCYLSLLKNVPYSDTFTVPKDSAEDLVKHAESLNKFLIESDTMGDIISLDRHQSILMTYYRNNIIHLFALPSLIAQMTIRQHGLSIDAIQENVAAIYPFLKKELFLSYDEDQLESVVANIIDELVGQGMLVVSNNQVTINQSNSQALMLLGRTISETLQRYSIALNLLAENPDLDKSDLEQKSQDIAQRLGRLHGINAPEFFDKGVFASMFATLKQQQYLDNDGNCDLEKTQQFAKLLYSMLYPEVRLTIQESIHQAE.

The HXXXXD motif motif lies at 305 to 310; it reads CHRSHM.

Belongs to the GPAT/DAPAT family.

It localises to the cell inner membrane. The enzyme catalyses sn-glycerol 3-phosphate + an acyl-CoA = a 1-acyl-sn-glycero-3-phosphate + CoA. Its pathway is phospholipid metabolism; CDP-diacylglycerol biosynthesis; CDP-diacylglycerol from sn-glycerol 3-phosphate: step 1/3. The sequence is that of Glycerol-3-phosphate acyltransferase from Vibrio atlanticus (strain LGP32) (Vibrio splendidus (strain Mel32)).